The sequence spans 502 residues: L-arabinose isomerase (502 aa).

The Mn(2+) site is built by Glu306, Glu333, His350, and His449.

The protein belongs to the arabinose isomerase family. The cofactor is Mn(2+).

The catalysed reaction is beta-L-arabinopyranose = L-ribulose. It functions in the pathway carbohydrate degradation; L-arabinose degradation via L-ribulose; D-xylulose 5-phosphate from L-arabinose (bacterial route): step 1/3. Catalyzes the conversion of L-arabinose to L-ribulose. The protein is L-arabinose isomerase of Flavobacterium johnsoniae (strain ATCC 17061 / DSM 2064 / JCM 8514 / BCRC 14874 / CCUG 350202 / NBRC 14942 / NCIMB 11054 / UW101) (Cytophaga johnsonae).